Here is a 332-residue protein sequence, read N- to C-terminus: 4-hydroxyproline 2-epimerase 2 (332 aa).

The active-site Proton acceptor is the Cys-89. Substrate is bound by residues His-222, Asp-248, and 253 to 254 (GT).

The protein belongs to the proline racemase family.

It catalyses the reaction trans-4-hydroxy-L-proline = cis-4-hydroxy-D-proline. Its function is as follows. Catalyzes the epimerization of trans-4-hydroxy-L-proline (t4LHyp) to cis-4-hydroxy-D-proline (c4DHyp). Is likely involved in a degradation pathway that converts t4LHyp to alpha-ketoglutarate. Displays no proline racemase activity. The protein is 4-hydroxyproline 2-epimerase 2 of Rhizobium rhizogenes (strain K84 / ATCC BAA-868) (Agrobacterium radiobacter).